The following is a 502-amino-acid chain: Maturase K (502 aa).

Belongs to the intron maturase 2 family. MatK subfamily.

The protein localises to the plastid. It localises to the chloroplast. Its function is as follows. Usually encoded in the trnK tRNA gene intron. Probably assists in splicing its own and other chloroplast group II introns. This is Maturase K from Vaccinium vitis-idaea (Mountain cranberry).